Reading from the N-terminus, the 156-residue chain is uncharacterized protein (156 aa).

This is an uncharacterized protein from Haemophilus influenzae (strain ATCC 51907 / DSM 11121 / KW20 / Rd).